We begin with the raw amino-acid sequence, 233 residues long: Cytochrome c oxidase subunit 3 (233 aa).

Transmembrane regions (helical) follow at residues 62–82, 98–118, 135–155, and 172–192; these read VVLF…AYLI, LELL…FVMH, WFGI…YEYF, and VLTG…LSVL.

It belongs to the cytochrome c oxidase subunit 3 family.

It localises to the cell membrane. It catalyses the reaction 4 Fe(II)-[cytochrome c] + O2 + 8 H(+)(in) = 4 Fe(III)-[cytochrome c] + 2 H2O + 4 H(+)(out). This is Cytochrome c oxidase subunit 3 (ctaE) from Synechocystis sp. (strain ATCC 27184 / PCC 6803 / Kazusa).